Here is an 894-residue protein sequence, read N- to C-terminus: Translation initiation factor IF-2 (894 aa).

Residues 52-301 are disordered; sequence DRGAAPNKLT…RRPSTLTQGF (250 aa). The segment covering 68-82 has biased composition (polar residues); the sequence is STLNIPSTGGKSKSV. Positions 107–154 are enriched in basic and acidic residues; sequence EQARREAEELAQHQVQRDAEEKAKRAAEDKAKREAAEQAKRVAAESDK. A compositionally biased stretch (polar residues) spans 155–168; sequence LTNQQTNTMTKSPQ. Composition is skewed to basic and acidic residues over residues 171 to 214 and 237 to 254; these read EKAR…ERGG and HAREAEDENDRKVEGDRR. The span at 255–269 shows a compositional bias: basic residues; sequence SRTRGGKATKQKKTS. Residues 270 to 283 are compositionally biased toward basic and acidic residues; the sequence is RLSESKADREEARA. A tr-type G domain is found at 393 to 562; the sequence is SRAPVVTIMG…LLQAEVLELK (170 aa). Residues 402–409 are G1; the sequence is GHVDHGKT. 402–409 serves as a coordination point for GTP; the sequence is GHVDHGKT. Positions 427–431 are G2; that stretch reads GITQH. Residues 448–451 are G3; that stretch reads DTPG. Residues 448–452 and 502–505 each bind GTP; these read DTPGH and NKID. The tract at residues 502–505 is G4; it reads NKID. Residues 538–540 form a G5 region; that stretch reads SAK.

This sequence belongs to the TRAFAC class translation factor GTPase superfamily. Classic translation factor GTPase family. IF-2 subfamily.

Its subcellular location is the cytoplasm. Functionally, one of the essential components for the initiation of protein synthesis. Protects formylmethionyl-tRNA from spontaneous hydrolysis and promotes its binding to the 30S ribosomal subunits. Also involved in the hydrolysis of GTP during the formation of the 70S ribosomal complex. The chain is Translation initiation factor IF-2 from Sodalis glossinidius (strain morsitans).